Reading from the N-terminus, the 116-residue chain is CDKN2AIP N-terminal-like protein (116 aa).

M1 carries the N-acetylmethionine modification. Residues 24–116 (AEQFRSYSES…RSELMKKHQS (93 aa)) enclose the XRN2-binding (XTBD) domain.

This sequence belongs to the CARF family. In terms of assembly, interacts with XRN2; the interaction is direct.

This Bos taurus (Bovine) protein is CDKN2AIP N-terminal-like protein (CDKN2AIPNL).